The following is a 226-amino-acid chain: Uracil-DNA glycosylase (226 aa).

The active-site Proton acceptor is the Asp64.

This sequence belongs to the uracil-DNA glycosylase (UDG) superfamily. UNG family.

The protein resides in the cytoplasm. The catalysed reaction is Hydrolyzes single-stranded DNA or mismatched double-stranded DNA and polynucleotides, releasing free uracil.. Excises uracil residues from the DNA which can arise as a result of misincorporation of dUMP residues by DNA polymerase or due to deamination of cytosine. In Proteus mirabilis (strain HI4320), this protein is Uracil-DNA glycosylase.